Consider the following 263-residue polypeptide: MSPPLELDYIGLSPPPPPPSSSSAAAARADDVDLKGTELRLGLPGSESPDRRPAAIAAAAATATTLELLPAKGAKRVFPDEAALTPPTAAAGKGKAAREGEEVGAEEEDKKVAAPPQPAAKAQVVGWPPIRSYRKNTMATNQIKSNKEDVDAKQGQGFLYVKVSMDGAPYLRKVDLKTYKNYKDMSLGLEKMFIGFSTGKEGAENQKDGEYVLTYEDKDGDWMLVGDVPWEMFTDSCRRLRIMKGSDAIGLAPRAGEKSKNRN.

2 disordered regions span residues 1 to 54 (MSPP…RRPA) and 76 to 121 (RVFP…PAAK). Over residues 28 to 38 (RADDVDLKGTE) the composition is skewed to basic and acidic residues. Residues 39–43 (LRLGL) carry the EAR-like (transcriptional repression) motif. The 88-residue stretch at 158-245 (FLYVKVSMDG…SCRRLRIMKG (88 aa)) folds into the PB1 domain.

This sequence belongs to the Aux/IAA family. Homodimers and heterodimers. Highly expressed in flowers. Expressed in roots and shoots.

The protein localises to the nucleus. Functionally, aux/IAA proteins are short-lived transcriptional factors that function as repressors of early auxin response genes at low auxin concentrations. This Oryza sativa subsp. japonica (Rice) protein is Auxin-responsive protein IAA3 (IAA3).